The sequence spans 384 residues: S-adenosylmethionine synthase (384 aa).

Histidine 15 provides a ligand contact to ATP. Mg(2+) is bound at residue aspartate 17. A K(+)-binding site is contributed by glutamate 43. Residues glutamate 56 and glutamine 99 each contribute to the L-methionine site. Positions 99-109 (QSADINQGVDR) are flexible loop. ATP contacts are provided by residues 164-166 (DAK), 230-231 (RF), aspartate 239, 245-246 (RK), alanine 262, and lysine 266. Aspartate 239 is a binding site for L-methionine. Lysine 270 is a binding site for L-methionine.

The protein belongs to the AdoMet synthase family. Homotetramer; dimer of dimers. Requires Mg(2+) as cofactor. It depends on K(+) as a cofactor.

The protein resides in the cytoplasm. The enzyme catalyses L-methionine + ATP + H2O = S-adenosyl-L-methionine + phosphate + diphosphate. The protein operates within amino-acid biosynthesis; S-adenosyl-L-methionine biosynthesis; S-adenosyl-L-methionine from L-methionine: step 1/1. Catalyzes the formation of S-adenosylmethionine (AdoMet) from methionine and ATP. The overall synthetic reaction is composed of two sequential steps, AdoMet formation and the subsequent tripolyphosphate hydrolysis which occurs prior to release of AdoMet from the enzyme. The protein is S-adenosylmethionine synthase of Haemophilus influenzae (strain 86-028NP).